Reading from the N-terminus, the 443-residue chain is Thymidine phosphorylase (443 aa).

This sequence belongs to the thymidine/pyrimidine-nucleoside phosphorylase family. As to quaternary structure, homodimer.

It carries out the reaction thymidine + phosphate = 2-deoxy-alpha-D-ribose 1-phosphate + thymine. The protein operates within pyrimidine metabolism; dTMP biosynthesis via salvage pathway; dTMP from thymine: step 1/2. The enzymes which catalyze the reversible phosphorolysis of pyrimidine nucleosides are involved in the degradation of these compounds and in their utilization as carbon and energy sources, or in the rescue of pyrimidine bases for nucleotide synthesis. In Shewanella loihica (strain ATCC BAA-1088 / PV-4), this protein is Thymidine phosphorylase.